Consider the following 549-residue polypeptide: Cation/acetate symporter ActP (549 aa).

A run of 13 helical transmembrane segments spans residues 33–53 (WQAI…TYWA), 77–97 (LAIA…ALVF), 103–123 (GLIY…LIAE), 148–168 (ILSA…QMVG), 183–203 (IAVV…GMLA), 206–226 (WVQI…AFMV), 262–282 (ISAL…PHIL), 303–323 (GFMG…IMLV), 355–375 (LFLG…VAGL), 404–424 (VSKI…FLFE), 428–448 (IAFM…PIIL), 464–484 (GGWL…TIWV), and 493–513 (IFPY…GIWF).

Belongs to the sodium:solute symporter (SSF) (TC 2.A.21) family.

It localises to the cell inner membrane. Its function is as follows. Transports acetate. The polypeptide is Cation/acetate symporter ActP (Salmonella paratyphi C (strain RKS4594)).